Reading from the N-terminus, the 360-residue chain is Isocitrate dehydrogenase [NAD] regulatory subunit B, mitochondrial (360 aa).

Residues 1 to 113 constitute a mitochondrion transit peptide; that stretch reads MLGRLRTVVK…MELRKALDLY (113 aa). 4 residues coordinate substrate: serine 101, asparagine 103, arginine 107, and arginine 140. Residue aspartate 227 participates in Mg(2+) binding. Residues 284-290 and asparagine 297 each bind NADP(+); that span reads HHVAADI.

The protein belongs to the isocitrate and isopropylmalate dehydrogenases family. As to quaternary structure, heterooligomer of catalytic and regulatory subunits. Mg(2+) is required as a cofactor. Mn(2+) serves as cofactor.

It is found in the mitochondrion. It catalyses the reaction D-threo-isocitrate + NAD(+) = 2-oxoglutarate + CO2 + NADH. Performs an essential role in the oxidative function of the citric acid cycle. The sequence is that of Isocitrate dehydrogenase [NAD] regulatory subunit B, mitochondrial (idhB) from Dictyostelium discoideum (Social amoeba).